The following is a 90-amino-acid chain: Trp-8 progonadoliberin (90 aa).

Positions 1–24 (MSRHVTVVLLLAVVLLLSSHMSHG) are cleaved as a signal peptide. A Pyrrolidone carboxylic acid modification is found at Gln25. A Glycine amide modification is found at Gly34.

Belongs to the GnRH family. In terms of tissue distribution, expressed in forebrain but not in testis, ovary, kidney and liver.

The protein localises to the secreted. Its function is as follows. Stimulates the secretion of gonadotropins. This Rana dybowskii (Dybovsky's frog) protein is Trp-8 progonadoliberin.